Consider the following 160-residue polypeptide: Phosphopantetheine adenylyltransferase (160 aa).

Thr10 provides a ligand contact to substrate. Residues 10-11 (TF) and His18 each bind ATP. Residues Lys42, Leu74, and Arg88 each coordinate substrate. ATP-binding positions include 89 to 91 (GLR), Glu99, and 124 to 130 (NSFISST).

The protein belongs to the bacterial CoaD family. Homohexamer. Mg(2+) is required as a cofactor.

It localises to the cytoplasm. It carries out the reaction (R)-4'-phosphopantetheine + ATP + H(+) = 3'-dephospho-CoA + diphosphate. It participates in cofactor biosynthesis; coenzyme A biosynthesis; CoA from (R)-pantothenate: step 4/5. Reversibly transfers an adenylyl group from ATP to 4'-phosphopantetheine, yielding dephospho-CoA (dPCoA) and pyrophosphate. In Aeromonas hydrophila subsp. hydrophila (strain ATCC 7966 / DSM 30187 / BCRC 13018 / CCUG 14551 / JCM 1027 / KCTC 2358 / NCIMB 9240 / NCTC 8049), this protein is Phosphopantetheine adenylyltransferase.